Consider the following 348-residue polypeptide: CCN family member 2 (348 aa).

A signal peptide spans 1-25; that stretch reads MLASVAGPISLALVLLALCTRPAMG. The IGFBP N-terminal domain occupies 26 to 97; sequence QDCSAQCQCA…NRKIGVCTAK (72 aa). 6 disulfide bridges follow: Cys28/Cys53, Cys32/Cys55, Cys34/Cys56, Cys42/Cys59, Cys67/Cys81, and Cys73/Cys94. Residues 100–166 form the VWFC domain; that stretch reads APCVFGGSVY…GKCCEEWVCD (67 aa). In terms of domain architecture, TSP type-1 spans 197 to 242; sequence NCLVQTTEWSACSKTCGMGISTRVTNDNTFCRLEKQSRLCMVRPCE. The interval 246–348 is heparin-binding; it reads EENIKKGKKC…YYRKMYGDMA (103 aa). 5 disulfide bridges follow: Cys255-Cys292, Cys272-Cys306, Cys283-Cys322, Cys286-Cys324, and Cys291-Cys328. The CTCK domain occupies 255–329; it reads CIRTPKIAKP…KTCACHYNCP (75 aa).

It belongs to the CCN family. Monomer. Interacts with TSKU. As to expression, testis, spleen, kidney, lung, heart, and brain (lowest level in testis and highest in lung).

The protein resides in the secreted. The protein localises to the extracellular space. It is found in the extracellular matrix. In terms of biological role, major connective tissue mitoattractant secreted by vascular endothelial cells. Promotes proliferation and differentiation of chondrocytes. Is involved in the stimulation of osteoblast differentiation and has a critical role in osteogenesis. Mediates heparin- and divalent cation-dependent cell adhesion in many cell types including fibroblasts, myofibroblasts, endothelial and epithelial cells. Enhances fibroblast growth factor-induced DNA synthesis. This chain is CCN family member 2, found in Mus musculus (Mouse).